A 126-amino-acid chain; its full sequence is Phosphoribosyl-AMP cyclohydrolase (126 aa).

Residue aspartate 82 participates in Mg(2+) binding. Position 83 (cysteine 83) interacts with Zn(2+). The Mg(2+) site is built by aspartate 84 and aspartate 86. Zn(2+) is bound by residues cysteine 99 and cysteine 106.

This sequence belongs to the PRA-CH family. As to quaternary structure, homodimer. Requires Mg(2+) as cofactor. Zn(2+) serves as cofactor.

It localises to the cytoplasm. The enzyme catalyses 1-(5-phospho-beta-D-ribosyl)-5'-AMP + H2O = 1-(5-phospho-beta-D-ribosyl)-5-[(5-phospho-beta-D-ribosylamino)methylideneamino]imidazole-4-carboxamide. It functions in the pathway amino-acid biosynthesis; L-histidine biosynthesis; L-histidine from 5-phospho-alpha-D-ribose 1-diphosphate: step 3/9. Catalyzes the hydrolysis of the adenine ring of phosphoribosyl-AMP. The sequence is that of Phosphoribosyl-AMP cyclohydrolase from Sphingopyxis alaskensis (strain DSM 13593 / LMG 18877 / RB2256) (Sphingomonas alaskensis).